An 84-amino-acid polypeptide reads, in one-letter code: UPF0386 protein NGR_c10980 (84 aa).

Belongs to the UPF0386 family.

In Sinorhizobium fredii (strain NBRC 101917 / NGR234), this protein is UPF0386 protein NGR_c10980.